The primary structure comprises 588 residues: Proline--tRNA ligase (588 aa).

This sequence belongs to the class-II aminoacyl-tRNA synthetase family. ProS type 1 subfamily. As to quaternary structure, homodimer.

Its subcellular location is the cytoplasm. It catalyses the reaction tRNA(Pro) + L-proline + ATP = L-prolyl-tRNA(Pro) + AMP + diphosphate. Catalyzes the attachment of proline to tRNA(Pro) in a two-step reaction: proline is first activated by ATP to form Pro-AMP and then transferred to the acceptor end of tRNA(Pro). As ProRS can inadvertently accommodate and process non-cognate amino acids such as alanine and cysteine, to avoid such errors it has two additional distinct editing activities against alanine. One activity is designated as 'pretransfer' editing and involves the tRNA(Pro)-independent hydrolysis of activated Ala-AMP. The other activity is designated 'posttransfer' editing and involves deacylation of mischarged Ala-tRNA(Pro). The misacylated Cys-tRNA(Pro) is not edited by ProRS. This is Proline--tRNA ligase from Corynebacterium glutamicum (strain R).